The primary structure comprises 446 residues: Tubulin alpha chain-like 3 (446 aa).

An MREC motif motif is present at residues 1-4; sequence MREC. 8 residues coordinate GTP: Q11, E78, S147, G151, T152, T186, N213, and N235. Position 78 (E78) interacts with Mg(2+). E261 is a catalytic residue.

Belongs to the tubulin family. In terms of assembly, dimer of alpha and beta chains. A typical microtubule is a hollow water-filled tube with an outer diameter of 25 nm and an inner diameter of 15 nM. Alpha-beta heterodimers associate head-to-tail to form protofilaments running lengthwise along the microtubule wall with the beta-tubulin subunit facing the microtubule plus end conferring a structural polarity. Microtubules usually have 13 protofilaments but different protofilament numbers can be found in some organisms and specialized cells. Requires Mg(2+) as cofactor. In terms of processing, some glutamate residues at the C-terminus are polyglutamylated, resulting in polyglutamate chains on the gamma-carboxyl group. Polyglutamylation plays a key role in microtubule severing by spastin (SPAST). SPAST preferentially recognizes and acts on microtubules decorated with short polyglutamate tails: severing activity by SPAST increases as the number of glutamates per tubulin rises from one to eight, but decreases beyond this glutamylation threshold. Glutamylation is also involved in cilia motility. Some glutamate residues at the C-terminus are monoglycylated but not polyglycylated due to the absence of functional TTLL10 in human. Monoglycylation is mainly limited to tubulin incorporated into cilia and flagella axonemes, which is required for their stability and maintenance. Flagella glycylation controls sperm motility. Both polyglutamylation and monoglycylation can coexist on the same protein on adjacent residues, and lowering glycylation levels increases polyglutamylation, and reciprocally.

It is found in the cytoplasm. The protein resides in the cytoskeleton. It catalyses the reaction GTP + H2O = GDP + phosphate + H(+). Functionally, tubulin is the major constituent of microtubules, a cylinder consisting of laterally associated linear protofilaments composed of alpha- and beta-tubulin heterodimers. Microtubules grow by the addition of GTP-tubulin dimers to the microtubule end, where a stabilizing cap forms. Below the cap, tubulin dimers are in GDP-bound state, owing to GTPase activity of alpha-tubulin. The sequence is that of Tubulin alpha chain-like 3 (TUBAL3) from Homo sapiens (Human).